The sequence spans 1187 residues: Myelin transcription factor 1-like protein (1187 aa).

Residues 1-20 are disordered; that stretch reads MDVDAEEKRHRTRSKGVRVP. The CCHHC-type 1 zinc finger occupies 22–65; it reads EPAIQELFSCPTPGCDGSGHVSGKYARHRSVYGCPLAKKRKTQD. Positions 31, 36, 49, and 55 each coordinate Zn(2+). Disordered regions lie at residues 56 to 178 and 221 to 248; these read PLAK…QMSC and RTESEMNSNTSNSLEDDSDKNENLGRKS. Residues 89–172 are compositionally biased toward acidic residues; it reads ECYESDGTED…EEEEEEEENE (84 aa). Serine 251 bears the Phosphoserine mark. Disordered regions lie at residues 343–422 and 450–509; these read SETN…DRSE and REKM…PTPG. Residues 344–358 are compositionally biased toward polar residues; it reads ETNPQDRSQPPNMSV. 3 stretches are compositionally biased toward basic and acidic residues: residues 362 to 377, 401 to 412, and 450 to 504; these read VRQEDDFPGRTPDRSY, AKEDGCHERDDD, and REKM…RESK. 2 CCHHC-type zinc fingers span residues 496 to 539 and 540 to 583; these read SRTE…PPEI and LAMH…KLAK. Residues cysteine 505, cysteine 510, histidine 523, cysteine 529, cysteine 549, cysteine 554, histidine 567, and cysteine 573 each coordinate Zn(2+). Residues 684 to 708 are disordered; it reads ASPSSSTTSSYAPSSSSNLSCGGGS. 3 consecutive CCHHC-type zinc fingers follow at residues 895–938, 944–987, and 997–1040; these read LATS…GIRI, DKED…QKDG, and KSVK…MKKA. Zn(2+) is bound by residues cysteine 904, cysteine 909, histidine 922, cysteine 928, cysteine 953, cysteine 958, histidine 971, cysteine 977, cysteine 1006, cysteine 1011, histidine 1024, and cysteine 1030. Residues 1055 to 1131 are a coiled coil; it reads SNGIENDEEI…LANLSQSLIH (77 aa).

The protein belongs to the MYT1 family. As to quaternary structure, interacts with SIN3B. Brain, testis and pituitary gland. Expression is higher in the brain than in the testis and pituitary gland. Highest level expression seen in the developing CNS.

It localises to the nucleus. The protein resides in the chromosome. Its function is as follows. Transcription factor that plays a key role in neuronal differentiation. Acts by specifically repressing expression of non-neuronal genes during neuron differentiation. In contrast to other transcription repressors that inhibit specific lineages, mediates repression of multiple differentiation programs. Also represses expression of negative regulators of neurogenesis, such as members of the Notch signaling pathway, including HES1. The combination of three transcription factors, ASCL1, POU3F2/BRN2 and MYT1L, is sufficient to reprogram fibroblasts and other somatic cells into induced neuronal (iN) cells in vitro. Directly binds the 5'-AAGTT-3' core motif present on the promoter of target genes and represses transcription by recruiting a multiprotein complex containing SIN3B. The 5'-AAGTT-3' core motif is absent from the promoter of neural genes. This Rattus norvegicus (Rat) protein is Myelin transcription factor 1-like protein (Myt1l).